Reading from the N-terminus, the 401-residue chain is Steroid C26-monooxygenase (401 aa).

Cys343 provides a ligand contact to heme.

The protein belongs to the cytochrome P450 family. The cofactor is heme.

It carries out the reaction cholest-4-en-3-one + 6 reduced [2Fe-2S]-[ferredoxin] + 3 O2 + 5 H(+) = (25R)-3-oxocholest-4-en-26-oate + 6 oxidized [2Fe-2S]-[ferredoxin] + 4 H2O. Its pathway is steroid metabolism; cholesterol degradation. Involved in the utilization of cholesterol as the sole carbon and energy source by degrading the side chain. Primarily catalyzes the sequential oxidation of the terminal methyl of cholest-4-en-3-one into (25R)-26-hydroxycholest-4-en-3-one (alcohol), (25R)-26-oxocholest-4-en-3-one (aldehyde), to finally yield the carboxylic acid (25R)-3-oxocholest-4-en-26-oate. Also able to sequentially oxidize cholesterol itself, not only cholest-4-en-3-one. This Mycolicibacterium smegmatis (strain ATCC 700084 / mc(2)155) (Mycobacterium smegmatis) protein is Steroid C26-monooxygenase.